Consider the following 174-residue polypeptide: Ribosome rescue factor SmrB (174 aa).

Residues 96–171 (LDLHGMNQQQ…GDSAILVLLD (76 aa)) enclose the Smr domain.

The protein belongs to the SmrB family. In terms of assembly, associates with collided ribosomes, but not with correctly translating polysomes.

In terms of biological role, acts as a ribosome collision sensor. Detects stalled/collided disomes (pairs of ribosomes where the leading ribosome is stalled and a second ribosome has collided with it) and endonucleolytically cleaves mRNA at the 5' boundary of the stalled ribosome. Stalled/collided disomes form a new interface (primarily via the 30S subunits) that binds SmrB. Cleaved mRNA becomes available for tmRNA ligation, leading to ribosomal subunit dissociation and rescue of stalled ribosomes. The chain is Ribosome rescue factor SmrB from Aeromonas hydrophila subsp. hydrophila (strain ATCC 7966 / DSM 30187 / BCRC 13018 / CCUG 14551 / JCM 1027 / KCTC 2358 / NCIMB 9240 / NCTC 8049).